The following is a 437-amino-acid chain: UBX domain-containing protein 6 (437 aa).

2 disordered regions span residues 1-45 and 89-109; these read MNSF…AQGG and ERRQ…QPDR. Basic residues predominate over residues 7 to 18; that stretch reads FLNKKRVQNHFK. The region spanning 179–251 is the PUB domain; that stretch reads ETAIETICKY…VFTKPSDVHL (73 aa). A UBX domain is found at 332-409; the sequence is YRYKYTLIRV…SLAPAALLHV (78 aa).

In terms of assembly, interacts with cdc-48.1 (via N-terminus) and cdc-48.2 (via N-terminus). In terms of tissue distribution, expressed in the pharynx and some head neurons.

In terms of biological role, probably acts as an adapter for ATPase cdc-48.1 and/or cdc-48.2, conferring substrate specificity. Involved in the lysosomal clearance of cellular material in diet restricted conditions. This is UBX domain-containing protein 6 from Caenorhabditis elegans.